Reading from the N-terminus, the 557-residue chain is Putative inactive polypeptide N-acetylgalactosaminyltransferase 11 (557 aa).

The Cytoplasmic segment spans residues 1–4; sequence MKSL. The chain crosses the membrane as a helical; Signal-anchor for type II membrane protein span at residues 5-27; that stretch reads LFGTPCSCAIFILVYCIITLFIW. Topologically, residues 28–557 are lumenal; that stretch reads FLYTDNLSNA…MRDICLSVNH (530 aa). 2 N-linked (GlcNAc...) asparagine glycosylation sites follow: asparagine 33 and asparagine 103. 5 disulfide bridges follow: cysteine 99-cysteine 325, cysteine 316-cysteine 397, cysteine 437-cysteine 450, cysteine 472-cysteine 486, and cysteine 511-cysteine 526. The tract at residues 109–215 is catalytic subdomain A; that stretch reads TVTVSIVIAI…RGWLPPLLEP (107 aa). A glycan (N-linked (GlcNAc...) asparagine) is linked at asparagine 220. The segment at 271–333 is catalytic subdomain B; the sequence is PYPSSQLEGR…PCSRVGIIYK (63 aa). An N-linked (GlcNAc...) asparagine glycan is attached at asparagine 379. The Ricin B-type lectin domain maps to 456–557; it reads EDWTLTSRCQ…MRDICLSVNH (102 aa).

It belongs to the glycosyltransferase 2 family. GalNAc-T subfamily.

The protein resides in the golgi apparatus membrane. Probable inactive glycosyltransferase. The protein is Putative inactive polypeptide N-acetylgalactosaminyltransferase 11 of Drosophila melanogaster (Fruit fly).